Consider the following 299-residue polypeptide: Ribosomal protein L11 methyltransferase (299 aa).

S-adenosyl-L-methionine-binding residues include Thr-152, Gly-172, Asp-194, and Asn-234.

The protein belongs to the methyltransferase superfamily. PrmA family.

It is found in the cytoplasm. The catalysed reaction is L-lysyl-[protein] + 3 S-adenosyl-L-methionine = N(6),N(6),N(6)-trimethyl-L-lysyl-[protein] + 3 S-adenosyl-L-homocysteine + 3 H(+). Its function is as follows. Methylates ribosomal protein L11. The chain is Ribosomal protein L11 methyltransferase from Geobacter metallireducens (strain ATCC 53774 / DSM 7210 / GS-15).